The primary structure comprises 419 residues: S-adenosylmethionine synthase (419 aa).

H14 serves as a coordination point for ATP. A Mg(2+)-binding site is contributed by D16. E42 serves as a coordination point for K(+). The L-methionine site is built by E55 and Q98. A flexible loop region spans residues 98-108 (QSADINQGVDR). Residues 164-166 (DAK), 242-243 (KF), D251, 257-258 (RK), A274, and K278 each bind ATP. D251 serves as a coordination point for L-methionine. Residue K282 participates in L-methionine binding.

Belongs to the AdoMet synthase family. Homotetramer; dimer of dimers. Requires Mg(2+) as cofactor. K(+) serves as cofactor.

The protein resides in the cytoplasm. The enzyme catalyses L-methionine + ATP + H2O = S-adenosyl-L-methionine + phosphate + diphosphate. The protein operates within amino-acid biosynthesis; S-adenosyl-L-methionine biosynthesis; S-adenosyl-L-methionine from L-methionine: step 1/1. Functionally, catalyzes the formation of S-adenosylmethionine (AdoMet) from methionine and ATP. The overall synthetic reaction is composed of two sequential steps, AdoMet formation and the subsequent tripolyphosphate hydrolysis which occurs prior to release of AdoMet from the enzyme. The protein is S-adenosylmethionine synthase of Cytophaga hutchinsonii (strain ATCC 33406 / DSM 1761 / CIP 103989 / NBRC 15051 / NCIMB 9469 / D465).